We begin with the raw amino-acid sequence, 723 residues long: Nuclear hormone receptor HR96 (723 aa).

Positions 4 to 79 form a DNA-binding region, nuclear receptor; that stretch reads PKNCAVCGDK…IGMKSENIMS (76 aa). 2 NR C4-type zinc fingers span residues 7-27 and 43-67; these read CAVC…CESC and CPFN…LRKC. Residues 95 to 163 are disordered; it reads AKRRLMENGT…QASSPGTQVN (69 aa). Composition is skewed to polar residues over residues 122-142 and 151-163; these read DSSS…SCGS and SGRQ…TQVN. Residues 483–723 form the NR LBD domain; sequence EQMKLRELRL…LREIFDLKNH (241 aa).

The protein belongs to the nuclear hormone receptor family. NR1 subfamily.

It localises to the nucleus. Functionally, binds selectively to the HSP27 20E response element. In Drosophila melanogaster (Fruit fly), this protein is Nuclear hormone receptor HR96 (Hr96).